The following is a 249-amino-acid chain: Probable transcriptional regulatory protein aq_1575 (249 aa).

Belongs to the TACO1 family.

Its subcellular location is the cytoplasm. The protein is Probable transcriptional regulatory protein aq_1575 of Aquifex aeolicus (strain VF5).